Here is a 239-residue protein sequence, read N- to C-terminus: tRNA (guanine-N(7)-)-methyltransferase (239 aa).

Residues Glu-68, Glu-93, Asp-120, and Asp-143 each coordinate S-adenosyl-L-methionine. Residue Asp-143 is part of the active site. Substrate-binding positions include Lys-147, Asp-180, and 217–220 (TKFE).

Belongs to the class I-like SAM-binding methyltransferase superfamily. TrmB family.

The catalysed reaction is guanosine(46) in tRNA + S-adenosyl-L-methionine = N(7)-methylguanosine(46) in tRNA + S-adenosyl-L-homocysteine. Its pathway is tRNA modification; N(7)-methylguanine-tRNA biosynthesis. Catalyzes the formation of N(7)-methylguanine at position 46 (m7G46) in tRNA. The polypeptide is tRNA (guanine-N(7)-)-methyltransferase (Vibrio cholerae serotype O1 (strain ATCC 39315 / El Tor Inaba N16961)).